The chain runs to 541 residues: Ankyrin repeat domain-containing protein 13C (541 aa).

A compositionally biased stretch (basic and acidic residues) spans 1 to 20 (MTGEKIRSLRRDHKPSKEEG). The interval 1–27 (MTGEKIRSLRRDHKPSKEEGDLLEPGD) is disordered. ANK repeat units follow at residues 111 to 142 (PAHYPVHECVFKGDVRRLSSLIRTHNIGQKDN), 143 to 172 (HGNTPLHLAVMLGNKECAHLLLAHNAPVKV), and 176 to 205 (QGWSPLAEAISYGDRQMITALLRKLKQQSR). Serine 411 bears the Phosphoserine mark.

It localises to the endoplasmic reticulum membrane. Acts as a molecular chaperone for G protein-coupled receptors, regulating their biogenesis and exit from the ER. The chain is Ankyrin repeat domain-containing protein 13C (ANKRD13C) from Homo sapiens (Human).